The sequence spans 670 residues: MTEYYGTLQKRPLEQESVAEGNGGLESGKKARGDSDVFAARSPENEDVDVDADADVDADADADADAEEDAQKDILEETKADELDEVVDEYEEKEVSSNFNGTASDHVGITSSNTGSTALAASSADTNSGSGNGTGTMATNGTLSDRQYAPQKPEHPIKLERRSVSRKYVFPVISKEDSLNARSYLKQFGSARFLDDYLPEDLNSLYVYHMIKLLGFQIKDKELMLAIQEVVHNADNDDSLPQKNSSETKNVSDTYTATYPSPSFEDPLEKKHAVRLIKDLQKAMNKVLSTRIRLTNFHTIDDFVAKLKTAKKIIVLTGAGISTSLGIPDFRSSEGFYSKLGDLGLNDPQDVFSLEVFTEDPSVFYNIAHMVLPPENMYSPLHSFIKMIQDKDKLLRNYTQNIDNLESYAGVEPEKMVQCHGSFATASCVTCHWKIQGERIFPNIRNLQLPICPYCYSKRLEFFKTKTDEELADGEDDDMDDHHGRSVPKSFGVLKPDITFFGEALPSKFHRLIREDVLQCDLLICIGTSLKVAPVSEIVNMIPAHVPQVLINKDPVKHAEFDLSLLGLCDDVAALVAQKCGWDIPHDNWNKLKNKVFDSEEVERGVYKVHPLNESPAELEAEEEKHLPLQQSTAALTPPVSLSADSPGRSSSSSPQPPTQTDIANNQTST.

2 disordered regions span residues 1–157 and 235–263; these read MTEY…EHPI and DNDD…PSPS. Positions 45–68 are enriched in acidic residues; sequence NEDVDVDADADVDADADADADAEE. The segment covering 69–81 has biased composition (basic and acidic residues); it reads DAQKDILEETKAD. Positions 82-92 are enriched in acidic residues; it reads ELDEVVDEYEE. Residues 96-119 are compositionally biased toward polar residues; it reads SSNFNGTASDHVGITSSNTGSTAL. Residues 120–142 show a composition bias toward low complexity; the sequence is AASSADTNSGSGNGTGTMATNGT. Over residues 239–261 the composition is skewed to polar residues; the sequence is SLPQKNSSETKNVSDTYTATYPS. Residues 293-583 form the Deacetylase sirtuin-type domain; it reads RLTNFHTIDD…ALVAQKCGWD (291 aa). NAD(+) contacts are provided by residues 318-337 and 400-403; these read GAGI…EGFY and QNID. Residue H420 is the Proton acceptor of the active site. Residues C428, C431, C452, and C455 each contribute to the Zn(2+) site. Residues 527-529, 552-554, and C569 each bind NAD(+); these read GTS and NKD. Residues 617–670 are disordered; that stretch reads AELEAEEEKHLPLQQSTAALTPPVSLSADSPGRSSSSSPQPPTQTDIANNQTST. Positions 641–654 are enriched in low complexity; it reads SLSADSPGRSSSSS. Polar residues predominate over residues 659 to 670; it reads TQTDIANNQTST.

It belongs to the sirtuin family. Class I subfamily. Zn(2+) is required as a cofactor.

The protein localises to the nucleus. It carries out the reaction N(6)-acetyl-L-lysyl-[protein] + NAD(+) + H2O = 2''-O-acetyl-ADP-D-ribose + nicotinamide + L-lysyl-[protein]. NAD-dependent deacetylase, which asts as a key regulator of gene expression believed to help form modified chromatin structures on the genes it regulates. It is involved in telomeric silencing and in hm mating type loci silencing. This Kluyveromyces lactis (strain ATCC 8585 / CBS 2359 / DSM 70799 / NBRC 1267 / NRRL Y-1140 / WM37) (Yeast) protein is NAD-dependent histone deacetylase SIR2 (SIR2).